A 176-amino-acid polypeptide reads, in one-letter code: Large ribosomal subunit protein uL10 (176 aa).

It belongs to the universal ribosomal protein uL10 family. Part of the ribosomal stalk of the 50S ribosomal subunit. The N-terminus interacts with L11 and the large rRNA to form the base of the stalk. The C-terminus forms an elongated spine to which L12 dimers bind in a sequential fashion forming a multimeric L10(L12)X complex.

Functionally, forms part of the ribosomal stalk, playing a central role in the interaction of the ribosome with GTP-bound translation factors. In Dehalococcoides mccartyi (strain ATCC BAA-2100 / JCM 16839 / KCTC 5957 / BAV1), this protein is Large ribosomal subunit protein uL10.